The following is an 818-amino-acid chain: IQ and AAA domain-containing protein 1-like (818 aa).

The IQ domain maps to 206–235 (QGQAAVTIQKVWKGYLQRKRTQQDRRMEME). Disordered regions lie at residues 344 to 377 (QMQE…AKKG) and 458 to 482 (EERP…KDLT). Residues 463 to 476 (RAPKKTPGKKTGKK) show a composition bias toward basic residues. Residue 567-574 (GPSGMGKK) participates in ATP binding. Residues 795-818 (SMKHRMDQLEAEEAKLDKEKKKRK) are disordered. The span at 798–818 (HRMDQLEAEEAKLDKEKKKRK) shows a compositional bias: basic and acidic residues.

Belongs to the AAA ATPase family.

This is IQ and AAA domain-containing protein 1-like (IQCA1L) from Homo sapiens (Human).